A 148-amino-acid polypeptide reads, in one-letter code: Deoxyuridine 5'-triphosphate nucleotidohydrolase (148 aa).

Substrate-binding positions include 68–70 (RSG), asparagine 81, 85–87 (TVD), and lysine 95.

Belongs to the dUTPase family. Requires Mg(2+) as cofactor.

The catalysed reaction is dUTP + H2O = dUMP + diphosphate + H(+). Its pathway is pyrimidine metabolism; dUMP biosynthesis; dUMP from dCTP (dUTP route): step 2/2. Its function is as follows. This enzyme is involved in nucleotide metabolism: it produces dUMP, the immediate precursor of thymidine nucleotides and it decreases the intracellular concentration of dUTP so that uracil cannot be incorporated into DNA. The chain is Deoxyuridine 5'-triphosphate nucleotidohydrolase from Caldanaerobacter subterraneus subsp. tengcongensis (strain DSM 15242 / JCM 11007 / NBRC 100824 / MB4) (Thermoanaerobacter tengcongensis).